We begin with the raw amino-acid sequence, 724 residues long: Palmitoyltransferase AKR1 (724 aa).

Over 1–308 (MSGQLNVAED…HAKMVTFFTP (308 aa)) the chain is Cytoplasmic. ANK repeat units lie at residues 54–84 (PTLV…DVKA), 90–119 (EQVS…DVNI), 124–153 (LEAT…DPLI), 157–187 (QGYN…PVDS), 191–220 (TGKT…DVRV), and 224–253 (GGFT…DVFL). A helical membrane pass occupies residues 309 to 329 (WLILGLILSFFAYFSILLAIL). Residues 330 to 331 (GC) are Lumenal-facing. A helical membrane pass occupies residues 332–352 (LLTVLAAGYGLYNFVFPSFIL). The Cytoplasmic segment spans residues 353–360 (MKRIVIFK). A helical transmembrane segment spans residues 361-381 (TPLLAGILSGTIFWLLYVWLF). The Lumenal segment spans residues 382-392 (KMLPATFDDEP). The chain crosses the membrane as a helical span at residues 393-413 (ILNLTVFALFAGVVFLLTKLL). At 414-489 (QSDPGYIVPA…YNYIGFRNHK (76 aa)) the chain is on the cytoplasmic side. The DHHC domain occupies 446–496 (HFCIHSWIRLPLRAKYKRFVHSVILRYDHYCPWIYNYIGFRNHKIFIYFIL). The active-site S-palmitoyl cysteine intermediate is Cys-476. A helical transmembrane segment spans residues 490–510 (IFIYFILLLDLGILALAKLCL). At 511–543 (EYFDELKDHAKNKDALKCSILSKDLCAGFTYDP) the chain is on the lumenal side. A helical transmembrane segment spans residues 544-564 (FTLFLLEWVCVQGMWILALSF). The Cytoplasmic portion of the chain corresponds to 565–724 (VQFFECLKGV…ERVISIEEIV (160 aa)).

It belongs to the DHHC palmitoyltransferase family. AKR/ZDHHC17 subfamily.

Its subcellular location is the early endosome membrane. The protein resides in the golgi apparatus membrane. It catalyses the reaction L-cysteinyl-[protein] + hexadecanoyl-CoA = S-hexadecanoyl-L-cysteinyl-[protein] + CoA. Functionally, palmitoyltransferase specific for casein kinase 1. This is Palmitoyltransferase AKR1 (AKR1) from Eremothecium gossypii (strain ATCC 10895 / CBS 109.51 / FGSC 9923 / NRRL Y-1056) (Yeast).